Here is an 82-residue protein sequence, read N- to C-terminus: U24 protein (82 aa).

The PPXY motif signature appears at 7–10 (PPSY). Residues 52–72 (FIILACLIISVILCLILILHI) traverse the membrane as a helical segment.

As to quaternary structure, interacts with host ITCH; this interaction probably mediates ITCH degradation. Interacts probably with NEDD4.

The protein resides in the membrane. Its function is as follows. Down-regulates of the TCR/CD3E complex and the transferrin receptor TFRC in host T-cells by blocking them from recycling back to the cell surface. This is U24 protein from Homo sapiens (Human).